We begin with the raw amino-acid sequence, 555 residues long: Efflux pump FUS6 (555 aa).

A disordered region spans residues 1 to 23 (MASAKDAQPAPEKSLSSDPQPEP). The next 5 helical transmembrane spans lie at 31-51 (WLIFVAISLTTFLAALDTSII), 67-87 (LYVWIIDAYLLASTATIPIFA), 97-117 (SLTLIAVCIFTLGSGLCGGAH), 130-150 (GIGGGGILTMSEIVVCDMVSI), and 159-179 (IIGGVWAIAAVVAPVMGGAFA). A glycan (N-linked (GlcNAc...) asparagine) is linked at Asn-181. Transmembrane regions (helical) follow at residues 186–206 (WIFYINLPIAGVSLVALGLFL), 225–245 (WGGSVLLIGSVTSIVLALSWG), and 253–273 (GWQTIVPLVIGLLALVAFFAY). An N-linked (GlcNAc...) asparagine glycan is attached at Asn-291. The next 6 membrane-spanning stretches (helical) occupy residues 297-317 (LLVISFIHSLLLYWICYFLPV), 332-352 (VMLFPIACTSAPAGVAAGITI), 360-380 (VWHFTGFVLMSIACGLFTLLD), 393-413 (ILFGVGTGTVFTSTLPPILAS), 425-445 (AWTFIRNFGSIWGVAIPAAVF), and 501-521 (KVVWQVSLAFCLLGFILCFFV). An N-linked (GlcNAc...) asparagine glycan is attached at Asn-545.

Belongs to the major facilitator superfamily. TCR/Tet family.

Its subcellular location is the membrane. Functionally, efflux pump; part of the gene cluster that mediates the biosynthesis of the mycotoxin fusarin C. Within the cluster, FUS1, FUS2, FUS8 and FUS9 are sufficient for fusarin production. The other FUS cluster members are not essential for fusarin C biosynthesis. The sequence is that of Efflux pump FUS6 from Gibberella fujikuroi (strain CBS 195.34 / IMI 58289 / NRRL A-6831) (Bakanae and foot rot disease fungus).